Here is a 130-residue protein sequence, read N- to C-terminus: Small ribosomal subunit protein uS8 (130 aa).

Belongs to the universal ribosomal protein uS8 family. As to quaternary structure, part of the 30S ribosomal subunit. Contacts proteins S5 and S12.

In terms of biological role, one of the primary rRNA binding proteins, it binds directly to 16S rRNA central domain where it helps coordinate assembly of the platform of the 30S subunit. The polypeptide is Small ribosomal subunit protein uS8 (Pectobacterium atrosepticum (strain SCRI 1043 / ATCC BAA-672) (Erwinia carotovora subsp. atroseptica)).